The chain runs to 99 residues: NADH-quinone oxidoreductase subunit K (99 aa).

The next 3 membrane-spanning stretches (helical) occupy residues 3–23, 28–48, and 59–79; these read PDNY…GVLL, IVMF…FVTF, and VVAF…LAII.

It belongs to the complex I subunit 4L family. As to quaternary structure, NDH-1 is composed of 14 different subunits. Subunits NuoA, H, J, K, L, M, N constitute the membrane sector of the complex.

It is found in the cell membrane. The enzyme catalyses a quinone + NADH + 5 H(+)(in) = a quinol + NAD(+) + 4 H(+)(out). In terms of biological role, NDH-1 shuttles electrons from NADH, via FMN and iron-sulfur (Fe-S) centers, to quinones in the respiratory chain. The immediate electron acceptor for the enzyme in this species is believed to be a menaquinone. Couples the redox reaction to proton translocation (for every two electrons transferred, four hydrogen ions are translocated across the cytoplasmic membrane), and thus conserves the redox energy in a proton gradient. The sequence is that of NADH-quinone oxidoreductase subunit K from Mycolicibacterium gilvum (strain PYR-GCK) (Mycobacterium gilvum (strain PYR-GCK)).